We begin with the raw amino-acid sequence, 262 residues long: Acyl-[acyl-carrier-protein]--UDP-N-acetylglucosamine O-acyltransferase (262 aa).

Belongs to the transferase hexapeptide repeat family. LpxA subfamily. In terms of assembly, homotrimer.

It localises to the cytoplasm. The catalysed reaction is a (3R)-hydroxyacyl-[ACP] + UDP-N-acetyl-alpha-D-glucosamine = a UDP-3-O-[(3R)-3-hydroxyacyl]-N-acetyl-alpha-D-glucosamine + holo-[ACP]. It functions in the pathway glycolipid biosynthesis; lipid IV(A) biosynthesis; lipid IV(A) from (3R)-3-hydroxytetradecanoyl-[acyl-carrier-protein] and UDP-N-acetyl-alpha-D-glucosamine: step 1/6. Its function is as follows. Involved in the biosynthesis of lipid A, a phosphorylated glycolipid that anchors the lipopolysaccharide to the outer membrane of the cell. In Vibrio parahaemolyticus serotype O3:K6 (strain RIMD 2210633), this protein is Acyl-[acyl-carrier-protein]--UDP-N-acetylglucosamine O-acyltransferase.